A 378-amino-acid polypeptide reads, in one-letter code: Alkaline elastase YaB (378 aa).

Positions 1–27 (MNKKMGKIVAGTALIISVAFSSSIAQA) are cleaved as a signal peptide. Positions 28-110 (AEEAKEKYLI…IEEDAEVTTM (83 aa)) are excised as a propeptide. Gln111 serves as a coordination point for Ca(2+). The region spanning 114–377 (PWGINRVQAP…SGLVNAEAAT (264 aa)) is the Peptidase S8 domain. Asp141 serves as the catalytic Charge relay system. Asp149 contributes to the Ca(2+) binding site. Residue His171 is the Charge relay system of the active site. The Ca(2+) site is built by Leu182, Asn184, Ile186, Val188, Ala272, Tyr274, and Ala277. The active-site Charge relay system is Ser324.

Belongs to the peptidase S8 family. The cofactor is Ca(2+).

Its subcellular location is the secreted. Digests elastin efficiently, has a substrate preference for Ala in P1 position. This Bacillus sp. (strain YaB) protein is Alkaline elastase YaB (ale).